The following is a 167-amino-acid chain: Crossover junction endodeoxyribonuclease RuvC (167 aa).

Residues Asp7, Glu67, and Asp140 contribute to the active site. The Mg(2+) site is built by Asp7, Glu67, and Asp140.

Belongs to the RuvC family. As to quaternary structure, homodimer which binds Holliday junction (HJ) DNA. The HJ becomes 2-fold symmetrical on binding to RuvC with unstacked arms; it has a different conformation from HJ DNA in complex with RuvA. In the full resolvosome a probable DNA-RuvA(4)-RuvB(12)-RuvC(2) complex forms which resolves the HJ. Mg(2+) is required as a cofactor.

It is found in the cytoplasm. The enzyme catalyses Endonucleolytic cleavage at a junction such as a reciprocal single-stranded crossover between two homologous DNA duplexes (Holliday junction).. In terms of biological role, the RuvA-RuvB-RuvC complex processes Holliday junction (HJ) DNA during genetic recombination and DNA repair. Endonuclease that resolves HJ intermediates. Cleaves cruciform DNA by making single-stranded nicks across the HJ at symmetrical positions within the homologous arms, yielding a 5'-phosphate and a 3'-hydroxyl group; requires a central core of homology in the junction. The consensus cleavage sequence is 5'-(A/T)TT(C/G)-3'. Cleavage occurs on the 3'-side of the TT dinucleotide at the point of strand exchange. HJ branch migration catalyzed by RuvA-RuvB allows RuvC to scan DNA until it finds its consensus sequence, where it cleaves and resolves the cruciform DNA. The sequence is that of Crossover junction endodeoxyribonuclease RuvC from Moorella thermoacetica (strain ATCC 39073 / JCM 9320).